Reading from the N-terminus, the 453-residue chain is Ethanolamine ammonia-lyase large subunit (453 aa).

Residues 160-162 (RLQ) and asparagine 193 each bind substrate. Adenosylcob(III)alamin contacts are provided by proline 194 and glutamine 246. Substrate is bound at residue glutamate 287. Residue serine 295 coordinates adenosylcob(III)alamin. Position 362 (aspartate 362) interacts with substrate. Methionine 401 is an adenosylcob(III)alamin binding site.

This sequence belongs to the EutB family. The basic unit is a heterodimer which dimerizes to form tetramers. The heterotetramers trimerize; 6 large subunits form a core ring with 6 small subunits projecting outwards. Requires adenosylcob(III)alamin as cofactor.

The protein localises to the bacterial microcompartment. The catalysed reaction is ethanolamine = acetaldehyde + NH4(+). The protein operates within amine and polyamine degradation; ethanolamine degradation. In terms of biological role, catalyzes the deamination of various vicinal amino-alcohols to oxo compounds. Allows this organism to utilize ethanolamine as the sole source of nitrogen and carbon in the presence of vitamin B12. This is Ethanolamine ammonia-lyase large subunit from Escherichia coli O157:H7.